The chain runs to 498 residues: MSPYFKLSSALIFLAITMEALCSPIENTSTSNKDNDKETEHIEISAKPSGISRGALGQGFEIHREDLLSKQFEATGEKIFEDLPMDECTVTTTLGTIERDDSFYNSTESLYQSVASSTKISGSLKGAYTLGVSVAAVTNNIASSEEEVQGLSLNLKAYSMSSILKKNCVNTKPLSKDLVSDFEALDSEITKPWKLSSWKKYKVLLEKYGSHIVKESISGSSIYQYVFAKSNQKFNHRSFTVKACVSLAGPKNASKVGFAGCTGVSQQEIEQSSSQSMIKKLVVRGGKTETRASLIGELDPDQINKFLIEAETDPSPIQYKFEPIWTILKNRYVGTEHFAKAVNLEQFYKGFLHFGCSFLHTSNADNADVEIQKFDFAKTSDPDAPTYVCKVGPEGCQHHEDCHYRAAFWCECGGPYDLARTCLRYKTEKLNSGSTKRECYPNKESGFAWHGCQLHGLSCWCSAPNKNWEETWSGEDTNNALNDVHQVLMEKKRRDQAK.

Positions 1–22 are cleaved as a signal peptide; the sequence is MSPYFKLSSALIFLAITMEALC. The propeptide occupies 23-35; it reads SPIENTSTSNKDN. Residues 23-359 enclose the MACPF domain; that stretch reads SPIENTSTSN…GFLHFGCSFL (337 aa). Positions 135-159 form a coiled coil; it reads AAVTNNIASSEEEVQGLSLNLKAYS. 3 disulfide bridges follow: Cys-389–Cys-402, Cys-396–Cys-410, and Cys-412–Cys-422. One can recognise an EGF-like domain in the interval 410-422; it reads CECGGPYDLARTC.

It is found in the secreted. It localises to the nematocyst. Its function is as follows. Is lethal to mice, and may cause hemolytic activity. This chain is DELTA-thalatoxin-Avl2a, found in Actineria villosa (Okinawan sea anemone).